The following is a 449-amino-acid chain: KASVGFKAGVKDYRLTYYTPDYETKDTDILAAFRVTPQPGVPAEEAGAAVAAESSTGTWTTVWTDGLTSLDRYKGRCYHIEAVVGEENQYICYVAYPLDLFEEGSVTNMFTSIVGNVFGFKALRALRLEDLRIPPAYSKTFQGPPHGIQVERDKLNKYGRPLLGCTIKPKLGLSAKNYGRAVYECLRGGLDFTKDDENVNSQPFMRWRDRFVFCAEAIYKAQAETGEIKGHYLNATAGTCEEMMKRVTFARELGAPIVMHDYLTGGFTANTTLAHYCRDNGLLLHIHRAMHAVIDRQKNHGMHFRVLAKALRMSGGDHIHAGTVVGKLEGEREMTLGFVDLLRDDFIEKDRRRGIFFTQDWVSMPGVIPVASGGIHVWHMPALTEIFGDDSVLQFGGGTIGHPWGNAPGAVANRVALEACVQARNEGRDLAREGNEIIREAAKWSPELA.

K7 bears the N6,N6,N6-trimethyllysine mark. N116 and T166 together coordinate substrate. K168 acts as the Proton acceptor in catalysis. K170 lines the substrate pocket. Residues K194, D196, and E197 each coordinate Mg(2+). K194 is subject to N6-carboxylysine. H287 serves as the catalytic Proton acceptor. Substrate-binding residues include R288, H320, and S372.

Belongs to the RuBisCO large chain family. Type I subfamily. Heterohexadecamer of 8 large chains and 8 small chains; disulfide-linked. The disulfide link is formed within the large subunit homodimers. Mg(2+) is required as a cofactor. The disulfide bond which can form in the large chain dimeric partners within the hexadecamer appears to be associated with oxidative stress and protein turnover.

Its subcellular location is the plastid. The protein resides in the chloroplast. It carries out the reaction 2 (2R)-3-phosphoglycerate + 2 H(+) = D-ribulose 1,5-bisphosphate + CO2 + H2O. It catalyses the reaction D-ribulose 1,5-bisphosphate + O2 = 2-phosphoglycolate + (2R)-3-phosphoglycerate + 2 H(+). RuBisCO catalyzes two reactions: the carboxylation of D-ribulose 1,5-bisphosphate, the primary event in carbon dioxide fixation, as well as the oxidative fragmentation of the pentose substrate in the photorespiration process. Both reactions occur simultaneously and in competition at the same active site. The sequence is that of Ribulose bisphosphate carboxylase large chain from Aspidistra elatior (Cast-iron plant).